The chain runs to 603 residues: Serine protease 56 (603 aa).

The signal sequence occupies residues 1 to 19 (MLLAVLLLLPLPSSWFAHG). Residues 64-96 (SHECRGSGRPRPQALLQDPPEPGPCGERRPSTA) are disordered. Asn-97 carries an N-linked (GlcNAc...) asparagine glycan. One can recognise a Peptidase S1 domain in the interval 105 to 337 (IVGGSAAPPG…FKDWLQEQMS (233 aa)). An intrachain disulfide couples Cys-130 to Cys-146. Residues His-145 and Asp-191 each act as charge relay system in the active site. 3 cysteine pairs are disulfide-bonded: Cys-225/Cys-292, Cys-256/Cys-271, and Cys-282/Cys-313. The Charge relay system role is filled by Ser-286. 2 disordered regions span residues 442–474 (PARE…NGCP) and 573–603 (EGPW…ARQP).

Belongs to the peptidase S1 family. Expressed neural retina, cornea, sclera and optic nerve.

In terms of biological role, serine protease required during eye development. The protein is Serine protease 56 (PRSS56) of Homo sapiens (Human).